The following is a 678-amino-acid chain: F-box/LRR-repeat protein 5 (678 aa).

The interval 1–159 (MAPFPDEVDL…IKKKVIAQHC (159 aa)) is hemerythrin-like. Fe(3+) contacts are provided by His15, His57, Glu58, Glu61, His80, His126, and Glu130. In terms of domain architecture, F-box spans 202–248 (SSSISSLPPEVMLNIFTYLNPQDLCRCSQVNTEWAQLAKTGSLWRHL). Residues 285–308 (YQEWDEDADIDESEETGEEEDSSI) are disordered. The segment covering 287–306 (EWDEDADIDESEETGEEEDS) has biased composition (acidic residues). LRR repeat units follow at residues 314-340 (EKEL…VLAY), 341-366 (SSAT…DLTQ), 367-392 (TDIS…DLSG), 393-420 (CDKI…RLLK), 566-594 (HSDI…SLSG), 595-622 (CHQI…NLSG), and 623-648 (CLNV…HFYY). [2Fe-2S] cluster-binding residues include Cys649, Cys663, Cys673, and Cys674. One copy of the LRR 8 repeat lies at 655–678 (PHGATASGCQNLQCGFRMCCRSGE).

Part of a SCF (SKP1-cullin-F-box) protein ligase complex. It depends on [2Fe-2S] cluster as a cofactor. Post-translationally, ubiquitinated upon iron and oxygen depletion, leading to its degradation by the proteasome. Ubiquitination is regulated by the hemerythrin-like region that acts as an oxygen and iron sensor.

Its subcellular location is the cytoplasm. It is found in the perinuclear region. It localises to the nucleus. It functions in the pathway protein modification; protein ubiquitination. In terms of biological role, component of some SCF (SKP1-cullin-F-box) protein ligase complex that plays a central role in iron homeostasis by promoting the ubiquitination and subsequent degradation of ireb2/irp2. Upon high iron and oxygen level, it specifically recognizes and binds ireb2/irp2, promoting its ubiquitination and degradation by the proteasome. This Xenopus laevis (African clawed frog) protein is F-box/LRR-repeat protein 5 (fbxl5).